We begin with the raw amino-acid sequence, 789 residues long: Protein translocase subunit SecA 2 (789 aa).

Residues glutamine 79, 97 to 101 (GEGKT), and aspartate 487 contribute to the ATP site.

It belongs to the SecA family. As to quaternary structure, monomer and homodimer. Part of the essential Sec protein translocation apparatus which comprises SecA, SecYEG and auxiliary proteins SecDF. Other proteins may also be involved.

It localises to the cell membrane. Its subcellular location is the cytoplasm. The catalysed reaction is ATP + H2O + cellular proteinSide 1 = ADP + phosphate + cellular proteinSide 2.. Functionally, part of the Sec protein translocase complex. Interacts with the SecYEG preprotein conducting channel. Has a central role in coupling the hydrolysis of ATP to the transfer of proteins into and across the cell membrane, serving as an ATP-driven molecular motor driving the stepwise translocation of polypeptide chains across the membrane. The protein is Protein translocase subunit SecA 2 of Pediococcus pentosaceus (strain ATCC 25745 / CCUG 21536 / LMG 10740 / 183-1w).